The following is a 348-amino-acid chain: Protein RecA (348 aa).

64-71 is a binding site for ATP; the sequence is GPESSGKT. Residues 325-335 are compositionally biased toward basic and acidic residues; it reads YEIDGANKEPL. The disordered stretch occupies residues 325-348; it reads YEIDGANKEPLEETEETLSLLDDE. Residues 336–348 show a composition bias toward acidic residues; sequence EETEETLSLLDDE.

The protein belongs to the RecA family.

It is found in the cytoplasm. Can catalyze the hydrolysis of ATP in the presence of single-stranded DNA, the ATP-dependent uptake of single-stranded DNA by duplex DNA, and the ATP-dependent hybridization of homologous single-stranded DNAs. It interacts with LexA causing its activation and leading to its autocatalytic cleavage. The polypeptide is Protein RecA (Listeria welshimeri serovar 6b (strain ATCC 35897 / DSM 20650 / CCUG 15529 / CIP 8149 / NCTC 11857 / SLCC 5334 / V8)).